A 360-amino-acid polypeptide reads, in one-letter code: Methyltransferase pvhD (360 aa).

S-adenosyl-L-methionine is bound by residues 201–202, Asp-227, 251–252, Arg-267, and Arg-268; these read SG and DL.

The protein belongs to the class I-like SAM-binding methyltransferase superfamily. Cation-independent O-methyltransferase family.

The protein operates within secondary metabolite biosynthesis. In terms of biological role, methyltransferase; part of the gene cluster that mediates the biosynthesis of varicidin A, an antifungal natural product containing a cis-octahydrodecalin core. The PKS module of pvhA together with the enoylreductase pvhC catalyze the formation of the polyketide unit which is then conjugated to L-isoleucine by the condensation domain of the NRPS module. Activity of the Dieckmann cyclase domain (RED) of pvhA results in release of an acyclic tetramate. The cytochrome P450 monooxygenase pvhE then catalyzes the oxidation of the C21 methyl group to a to carboxylate group. The methyltransferase pvhD then further methylates the pvhE product. The Diels-Alderase pvhB is able to catalyze Diels-Alder cycloaddition using both pvhE and pvhD products as substrates to form the decalin ring, yielding varicidin B and A, respectively. The chain is Methyltransferase pvhD from Talaromyces variabilis (Penicillium variabile).